The chain runs to 451 residues: NADH-quinone oxidoreductase subunit H (451 aa).

9 helical membrane passes run 30-50, 98-118, 138-158, 176-196, 213-233, 262-282, 302-322, 336-356, and 368-388; these read LIIVKTLGVFAFLVLATLFMI, AVFILAPVISATPAFLAFAVI, LPVAVLFVLAMSSLGVYGIVL, AAQVVSYEIAMGLSFVGVFLY, WGILWAGVSFAVYAIAMVGET, LFYLAEYINMVTVSALMTTLF, WWPVLWFLIKLGIVLFVFIWL, QFGWKVLIPVNLTWILVEAAI, and VIPFAIFLALVAVGTYVADLV.

It belongs to the complex I subunit 1 family. In terms of assembly, NDH-1 is composed of 14 different subunits. Subunits NuoA, H, J, K, L, M, N constitute the membrane sector of the complex.

The protein resides in the cell membrane. The enzyme catalyses a quinone + NADH + 5 H(+)(in) = a quinol + NAD(+) + 4 H(+)(out). In terms of biological role, NDH-1 shuttles electrons from NADH, via FMN and iron-sulfur (Fe-S) centers, to quinones in the respiratory chain. The immediate electron acceptor for the enzyme in this species is believed to be ubiquinone. Couples the redox reaction to proton translocation (for every two electrons transferred, four hydrogen ions are translocated across the cytoplasmic membrane), and thus conserves the redox energy in a proton gradient. This subunit may bind ubiquinone. The chain is NADH-quinone oxidoreductase subunit H from Acidothermus cellulolyticus (strain ATCC 43068 / DSM 8971 / 11B).